A 351-amino-acid chain; its full sequence is Actin maturation protease (351 aa).

The segment covering 1-19 (MTSPCSPPLKPPISPPKTP) has biased composition (pro residues). The disordered stretch occupies residues 1–70 (MTSPCSPPLK…PPAATGPAPR (70 aa)). Residues 36–50 (LDFSALPSPPWSQQT) show a composition bias toward low complexity. Over residues 51-64 (PVPPPLPLPPPPAA) the composition is skewed to pro residues. Positions 124 to 244 (SLIQEGPQCG…WAVSAGVLLG (121 aa)) are peptidase C39-like. Residue Cys-132 is part of the active site. Ser-316 carries the phosphoserine modification.

Belongs to the ACTMAP family. Interacts (via N-terminus) with PFN2 isoforms IIa and IIb; the interactions may facilitate efficient cleavage of the acetylated N-terminus of immature actin. Interacts with PFN1.

Its subcellular location is the cytoplasm. The enzyme catalyses N-terminal N(alpha)-acetyl-L-methionyl-L-aspartyl-[protein] + H2O = N-terminal L-aspartyl-[protein] + N-acetyl-L-methionine. It catalyses the reaction N-terminal N(alpha)-acetyl-L-methionyl-L-glutamyl-[protein] + H2O = N-terminal L-glutamyl-[protein] + N-acetyl-L-methionine. The catalysed reaction is N-terminal N(alpha)-acetyl-L-cysteinyl-L-aspartyl-[protein] + H2O = N-terminal L-aspartyl-[protein] + N-acetyl-L-cysteine. It carries out the reaction N-terminal N(alpha)-acetyl-L-cysteinyl-L-glutamyl-[protein] + H2O = N-terminal L-glutamyl-[protein] + N-acetyl-L-cysteine. In terms of biological role, actin maturation protease that specifically mediates the cleavage of immature acetylated N-terminal actin, thereby contributing to actin maturation. Cleaves N-terminal acetylated methionine of immature cytoplasmic beta- and gamma-actins ACTB and ACTG1 after translation. Cleaves N-terminal acetylated cysteine of muscle alpha-actins ACTA1, ACTC1 and ACTA2 after canonical removal of N-terminal methionine. This chain is Actin maturation protease, found in Homo sapiens (Human).